A 130-amino-acid chain; its full sequence is Glycine cleavage system H protein (130 aa).

The Lipoyl-binding domain occupies 25–106; it reads VALIGITDFA…PFDTWMVKLK (82 aa). Lysine 66 carries the N6-lipoyllysine modification.

Belongs to the GcvH family. In terms of assembly, the glycine cleavage system is composed of four proteins: P, T, L and H. It depends on (R)-lipoate as a cofactor.

The glycine cleavage system catalyzes the degradation of glycine. The H protein shuttles the methylamine group of glycine from the P protein to the T protein. The polypeptide is Glycine cleavage system H protein (Leptospira biflexa serovar Patoc (strain Patoc 1 / Ames)).